Reading from the N-terminus, the 482-residue chain is tRNA sulfurtransferase (482 aa).

Residues 61–165 enclose the THUMP domain; sequence PVIADALTRI…NDKLMLVKAR (105 aa). ATP contacts are provided by residues 183 to 184, lysine 265, glycine 287, and glutamine 296; that span reads LI. Cysteine 344 and cysteine 456 are oxidised to a cystine. In terms of domain architecture, Rhodanese spans 404-482; sequence FDADQVILDI…GFTNVKVYRP (79 aa). Cysteine 456 acts as the Cysteine persulfide intermediate in catalysis.

Belongs to the ThiI family.

The protein localises to the cytoplasm. It carries out the reaction [ThiI sulfur-carrier protein]-S-sulfanyl-L-cysteine + a uridine in tRNA + 2 reduced [2Fe-2S]-[ferredoxin] + ATP + H(+) = [ThiI sulfur-carrier protein]-L-cysteine + a 4-thiouridine in tRNA + 2 oxidized [2Fe-2S]-[ferredoxin] + AMP + diphosphate. It catalyses the reaction [ThiS sulfur-carrier protein]-C-terminal Gly-Gly-AMP + S-sulfanyl-L-cysteinyl-[cysteine desulfurase] + AH2 = [ThiS sulfur-carrier protein]-C-terminal-Gly-aminoethanethioate + L-cysteinyl-[cysteine desulfurase] + A + AMP + 2 H(+). It functions in the pathway cofactor biosynthesis; thiamine diphosphate biosynthesis. Catalyzes the ATP-dependent transfer of a sulfur to tRNA to produce 4-thiouridine in position 8 of tRNAs, which functions as a near-UV photosensor. Also catalyzes the transfer of sulfur to the sulfur carrier protein ThiS, forming ThiS-thiocarboxylate. This is a step in the synthesis of thiazole, in the thiamine biosynthesis pathway. The sulfur is donated as persulfide by IscS. In Serratia proteamaculans (strain 568), this protein is tRNA sulfurtransferase.